The primary structure comprises 64 residues: Disintegrin lebein-1-beta (64 aa).

Residues 1-64 (NSGNPCCDPV…SDCPRNPYKD (64 aa)) form the Disintegrin domain. Disulfide bonds link C6-C29, C20-C26, C25-C50, and C38-C57. Positions 42–44 (RGD) match the Cell attachment site motif.

Belongs to the disintegrin family. Dimeric disintegrin subfamily. Heterodimer with subunit alpha; disulfide-linked. Expressed by the venom gland.

It localises to the secreted. Strongly inhibits ADP-induced platelet aggregation on human platelet-rich plasma. Also avidly binds to the laminin-binding beta-1 integrins (alpha-3/beta-1, alpha-6/beta-1, and alpha-7/beta-1) in an RGD-independent manner. In Macrovipera lebetinus (Levantine viper), this protein is Disintegrin lebein-1-beta.